The primary structure comprises 167 residues: uncharacterized protein (167 aa).

2 consecutive transmembrane segments (helical) span residues 21 to 41 (KIGLAIFLIGAFINLIHIYKP) and 87 to 107 (MIITFILVQTTLITLDLYVFG). Over residues 136-159 (RKQRLKEQREKKEQKKEQKKEKKT) the composition is skewed to basic and acidic residues. Positions 136–167 (RKQRLKEQREKKEQKKEQKKEKKTERRKKKKL) are disordered.

It localises to the membrane. This is an uncharacterized protein from Schizosaccharomyces pombe (strain 972 / ATCC 24843) (Fission yeast).